We begin with the raw amino-acid sequence, 212 residues long: Thymidylate kinase (212 aa).

Residue Ala2 is modified to N-acetylalanine. Residues 16 to 21 and Arg97 contribute to the ATP site; that span reads RAGKST. The tract at residues 133 to 157 is LID; it reads LQLQLADAAKRGAFGHERYENGAFQ. An N6-acetyllysine modification is found at Lys169. ATP is bound by residues Lys182 and Arg192.

The protein belongs to the thymidylate kinase family. Homodimer. Mg(2+) serves as cofactor.

The catalysed reaction is dTMP + ATP = dTDP + ADP. The protein operates within pyrimidine metabolism; dTTP biosynthesis. Functionally, catalyzes the phosphorylation of thymidine monophosphate (dTMP) to thymidine diphosphate (dTDP), the immediate precursor for the DNA building block dTTP, with ATP as the preferred phosphoryl donor in the presence of Mg(2+). This chain is Thymidylate kinase (DTYMK), found in Homo sapiens (Human).